The chain runs to 457 residues: MAASVEHDSLESMEAPQTAVEVEETKTFKDLGVTDVLCEACDQLGWTKPTKIQIEAIPLALQGRDIIGLAETGSGKTGAFALPILNALLETPQRLFALVLTPTRELAFQISEQFEALGSSIGVQCAVIVGGIDSMSQSLALAKKPHIVIATPGRLIDHLENTKGFNLRALKYLVMDEADRILNMDFETEVDKILKVIPRDRKTFLFSATMTKKVQKLQRAALKNPVKCAVSSKYQTVEKLQQYYLFIPSKFKDTYLVYILNELAGNSFMIFCSTCNNTQRTALLLRNLGFTAIPLHGQMSQSKRLGSLNKFKAKARSILLATDVASRGLDIPHVDVVVNFDIPTHSKDYIHRVGRTARAGRSGKAITFVTQYDVELFQRIEHLIGKKLPVFPTQDDEVMMLTERVTEAQRFARMELREHGEKKKRSREDVGDNDDTEGAIGVRNKVAGGKMKKRKGR.

At A2 the chain carries N-acetylalanine. The residue at position 9 (S9) is a Phosphoserine. The Q motif signature appears at 26 to 54; it reads KTFKDLGVTDVLCEACDQLGWTKPTKIQI. Residues 57 to 228 enclose the Helicase ATP-binding domain; it reads IPLALQGRDI…RAALKNPVKC (172 aa). 70–77 serves as a coordination point for ATP; that stretch reads AETGSGKT. T151 is modified (phosphothreonine). Residues 176-179 carry the DEAD box motif; sequence DEAD. In terms of domain architecture, Helicase C-terminal spans 239–399; the sequence is KLQQYYLFIP…VFPTQDDEVM (161 aa). A compositionally biased stretch (basic and acidic residues) spans 415 to 430; the sequence is ELREHGEKKKRSREDV. Positions 415–457 are disordered; it reads ELREHGEKKKRSREDVGDNDDTEGAIGVRNKVAGGKMKKRKGR. The residue at position 426 (S426) is a Phosphoserine.

Belongs to the DEAD box helicase family. DDX47/RRP3 subfamily. As to quaternary structure, interacts with AGO1 and AGO2. Interacts with GABARAP. Interacts with NOL8; the interaction is RNA-dependent.

The protein resides in the nucleus. The protein localises to the nucleolus. It catalyses the reaction ATP + H2O = ADP + phosphate + H(+). Its function is as follows. Involved in apoptosis. May have a role in rRNA processing and mRNA splicing. Associates with pre-rRNA precursors. The polypeptide is Probable ATP-dependent RNA helicase DDX47 (DDX47) (Bos taurus (Bovine)).